We begin with the raw amino-acid sequence, 259 residues long: Ribosomal RNA large subunit methyltransferase E (259 aa).

The S-adenosyl-L-methionine site is built by glycine 58, tryptophan 60, aspartate 78, aspartate 96, and aspartate 120. Lysine 160 (proton acceptor) is an active-site residue.

Belongs to the class I-like SAM-binding methyltransferase superfamily. RNA methyltransferase RlmE family.

The protein localises to the cytoplasm. It catalyses the reaction uridine(2552) in 23S rRNA + S-adenosyl-L-methionine = 2'-O-methyluridine(2552) in 23S rRNA + S-adenosyl-L-homocysteine + H(+). Its function is as follows. Specifically methylates the uridine in position 2552 of 23S rRNA at the 2'-O position of the ribose in the fully assembled 50S ribosomal subunit. This chain is Ribosomal RNA large subunit methyltransferase E, found in Methanococcus vannielii (strain ATCC 35089 / DSM 1224 / JCM 13029 / OCM 148 / SB).